Here is a 140-residue protein sequence, read N- to C-terminus: Probable NADH dehydrogenase [ubiquinone] iron-sulfur protein 6, mitochondrial (140 aa).

It belongs to the complex I NDUFS6 subunit family. As to quaternary structure, complex I is composed of 45 different subunits. This is a component of the iron-sulfur (IP) fragment of the enzyme.

The protein localises to the mitochondrion inner membrane. Accessory subunit of the mitochondrial membrane respiratory chain NADH dehydrogenase (Complex I), that is believed not to be involved in catalysis. Complex I functions in the transfer of electrons from NADH to the respiratory chain. The immediate electron acceptor for the enzyme is believed to be ubiquinone. This chain is Probable NADH dehydrogenase [ubiquinone] iron-sulfur protein 6, mitochondrial (nduf-6), found in Caenorhabditis elegans.